A 595-amino-acid polypeptide reads, in one-letter code: UvrABC system protein C (595 aa).

A GIY-YIG domain is found at 17–94 (IEPGCYLMKD…IKQYQPRYNI (78 aa)). In terms of domain architecture, UVR spans 199–234 (KTILHNLEQKMQESSESLDFERAKEYRDLIQHIHNL).

The protein belongs to the UvrC family. Interacts with UvrB in an incision complex.

The protein localises to the cytoplasm. Functionally, the UvrABC repair system catalyzes the recognition and processing of DNA lesions. UvrC both incises the 5' and 3' sides of the lesion. The N-terminal half is responsible for the 3' incision and the C-terminal half is responsible for the 5' incision. In Staphylococcus saprophyticus subsp. saprophyticus (strain ATCC 15305 / DSM 20229 / NCIMB 8711 / NCTC 7292 / S-41), this protein is UvrABC system protein C.